We begin with the raw amino-acid sequence, 180 residues long: O-acetyl-ADP-ribose deacetylase (180 aa).

Residues 1–175 (MKPQIEVVVG…LYQRLLIQRG (175 aa)) enclose the Macro domain. Residues 11-12 (DI), N25, 33-35 (GVD), and 122-126 (STGVY) contribute to the substrate site. D35 acts as the Proton acceptor in catalysis.

The protein belongs to the MacroD-type family. YmdB subfamily. In terms of assembly, homodimer. Interacts with RNase III.

The enzyme catalyses 3''-O-acetyl-ADP-D-ribose + H2O = ADP-D-ribose + acetate + H(+). It catalyses the reaction 2''-O-acetyl-ADP-D-ribose + H2O = ADP-D-ribose + acetate + H(+). Functionally, deacetylates O-acetyl-ADP ribose to yield ADP-ribose and free acetate. Down-regulates ribonuclease 3 (RNase III) activity. Acts by interacting directly with the region of the ribonuclease that is required for dimerization/activation. The protein is O-acetyl-ADP-ribose deacetylase of Enterobacter sp. (strain 638).